The primary structure comprises 371 residues: Protein-tyrosine sulfotransferase 2 (371 aa).

Residues M1 to V8 lie on the Cytoplasmic side of the membrane. The helical; Signal-anchor for type II membrane protein transmembrane segment at L9–G25 threads the bilayer. Topologically, residues Q26–H371 are lumenal. R76–T80 is a 3'-phosphoadenylyl sulfate binding site. A disulfide bridge links C94 with C154. E97 acts as the Proton donor/acceptor in catalysis. The interval R99–R103 is interaction with peptide substrate. 3'-phosphoadenylyl sulfate is bound by residues R181, S189, and R193. A disulfide bond links C223 and C231. Residues Y236, S283–N292, and K298 contribute to the 3'-phosphoadenylyl sulfate site. Residues N341 and N366 are each glycosylated (N-linked (GlcNAc...) asparagine).

Belongs to the protein sulfotransferase family.

It localises to the golgi apparatus membrane. The enzyme catalyses L-tyrosyl-[protein] + 3'-phosphoadenylyl sulfate = O-sulfo-L-tyrosine-[protein] + adenosine 3',5'-bisphosphate + H(+). Catalyzes the O-sulfation of tyrosine residues within acidic motifs of polypeptides, using 3'-phosphoadenylyl sulfate (PAPS) as cosubstrate. The chain is Protein-tyrosine sulfotransferase 2 (TPST2) from Gallus gallus (Chicken).